Consider the following 156-residue polypeptide: Tripartite terminase subunit 2 (156 aa).

The disordered stretch occupies residues Met-1–Ser-37. The segment covering Ser-19–Ser-37 has biased composition (polar residues).

Belongs to the herpesviridae TRM2 protein family. Associates with TRM1 and TRM3 to form the tripartite terminase complex.

Its subcellular location is the host nucleus. Functionally, component of the molecular motor that translocates viral genomic DNA in empty capsid during DNA packaging. Forms a tripartite terminase complex together with TRM1 and TRM3 in the host cytoplasm. Once the complex reaches the host nucleus, it interacts with the capsid portal vertex. This portal forms a ring in which genomic DNA is translocated into the capsid. This is Tripartite terminase subunit 2 from Varicella-zoster virus (strain Dumas) (HHV-3).